A 441-amino-acid chain; its full sequence is E3 ubiquitin-protein ligase APD1 (441 aa).

Transmembrane regions (helical) follow at residues 60–80 (SNLY…FILI) and 305–325 (IAYV…IQFC). An RING-type zinc finger spans residues 390–429 (CAICFDVPRDCFFLPCGHSVSCYECGTTMQEADGSCPICR).

In terms of tissue distribution, expressed in the shoot apical meristems (SAM), root tips and inflorescences, and, at low levels, in floral buds and pollen.

It is found in the endomembrane system. The protein resides in the vacuole membrane. It carries out the reaction S-ubiquitinyl-[E2 ubiquitin-conjugating enzyme]-L-cysteine + [acceptor protein]-L-lysine = [E2 ubiquitin-conjugating enzyme]-L-cysteine + N(6)-ubiquitinyl-[acceptor protein]-L-lysine.. It functions in the pathway protein modification; protein ubiquitination. In terms of biological role, involved in pollen mitosis II (PMII) regulation during male gametogenesis. The sequence is that of E3 ubiquitin-protein ligase APD1 from Arabidopsis thaliana (Mouse-ear cress).